The sequence spans 427 residues: Enolase (427 aa).

Gln-163 contacts (2R)-2-phosphoglycerate. Glu-205 functions as the Proton donor in the catalytic mechanism. Residues Asp-242, Glu-285, and Asp-312 each contribute to the Mg(2+) site. Lys-337, Arg-366, Ser-367, and Lys-388 together coordinate (2R)-2-phosphoglycerate. The active-site Proton acceptor is the Lys-337.

It belongs to the enolase family. Mg(2+) is required as a cofactor.

The protein resides in the cytoplasm. Its subcellular location is the secreted. It localises to the cell surface. It carries out the reaction (2R)-2-phosphoglycerate = phosphoenolpyruvate + H2O. The protein operates within carbohydrate degradation; glycolysis; pyruvate from D-glyceraldehyde 3-phosphate: step 4/5. Catalyzes the reversible conversion of 2-phosphoglycerate (2-PG) into phosphoenolpyruvate (PEP). It is essential for the degradation of carbohydrates via glycolysis. The chain is Enolase from Herminiimonas arsenicoxydans.